Here is a 790-residue protein sequence, read N- to C-terminus: Vacuolar protein sorting-associated protein 35C (790 aa).

Residue Met-1 is modified to N-acetylmethionine.

This sequence belongs to the VPS35 family. Component of the retromer complex which consists of VPS29 (MAG1), VPS26 (VPS26A or VPS26B), VPS35 (VPS35A or VPS35B or VPS35C), VPS5/17 (SNX1 or SNX2A or SNX2B). Component of a retromer subcomplex consisting of VPS29 (MAG1), VPS26 (VPS26A or VPS26B), VPS35 (VPS35A or VPS35B or VPS35C).

It localises to the cytoplasm. The protein localises to the endosome membrane. It is found in the prevacuolar compartment membrane. Its subcellular location is the golgi apparatus. The protein resides in the trans-Golgi network membrane. Its function is as follows. Plays a role in vesicular protein sorting. Component of the membrane-associated retromer complex which is essential in endosome-to-Golgi retrograde transport. Also involved in the efficient sorting of seed storage proteins. The VPS29-VPS26-VPS35 subcomplex may be involved in recycling of specific cargos from endosome to the plasma membrane. In Arabidopsis thaliana (Mouse-ear cress), this protein is Vacuolar protein sorting-associated protein 35C (VPS35C).